An 825-amino-acid chain; its full sequence is MVLSSSCTTVPHLSSLAVVQLGPWSSRIKKKTDAVAVPAAAGRWRARARAQDTSESAAVAKGSSLTPIVRTDAESRRTRWPTDDDDAEPLVDEIRAMLTSMSDGDISVSAYDTAWVGLVPRLDGGEGPQFPAAVRWIRNNQLPDGSWGDAALFSAYDRLINTLACVVTLTRWSLEPEMRGRGLSFLGRNMWKLATEDEESMPIGFELAFPSLIELAKSLGVHDFPYDHQALQAIYSSREIKVKRIPKEVMHTVPTSILHSLEGMPGLDWARLLKLQSSDGSFLFSPAATAYALMNTGDDRCFSYIDRTVKKFNGGVPNVYPVDLFEHIWAVDRLERLGISRYFQKEIEQCMDYVNRHWTEDGICWARNSDVKEVDDTAMAFRLLRLHGYSVSPDVFKNFEKDGEFFAFVGQSNQAVTGMYNLNRASQISFPGEDVLHRAGPFSYEFLRRKQAEGALRDKWIISKDLPGEVVYTLDFPWYGNLPRVEARDYLEQYGGGDDVWIGKTLYRMPLVNNDVYLELARMDFNHCQALHQLEWQGLKKWYTENRLMDFGVAQEDALRAYFLAAASVYEPCRAAERLAWARAAILANAVSTHLRNSPSFRERLEHSLRCRPSEETDGSWFNSSSGSDAVLVKAVLRLTDSLAREAQPIHGGDPEDIHKLLRSAWAEWVREKADAADSVCNGSSAVEQEGSRMVHDKQTCLLLARMIEISAGRAAGEAASEDGDRRIIQLTGSICDSLKQKMLVSQDPEKNEEMMSHVDDELKLRIREFVQYLLRLGEKKTGSSETRQTFLSIVKSCYYAAHCPPHVVDRHISRVIFEPVSAAK.

A chloroplast-targeting transit peptide spans 1–70; it reads MVLSSSCTTV…KGSSLTPIVR (70 aa). Substrate is bound at residue Lys241. Residues 373–376 carry the DXDD motif motif; that stretch reads EVDD. Lys459 is a substrate binding site.

This sequence belongs to the terpene synthase family. Tpsc subfamily. Mg(2+) serves as cofactor. In terms of tissue distribution, expressed in tassels.

The protein resides in the plastid. Its subcellular location is the chloroplast. The catalysed reaction is (2E,6E,10E)-geranylgeranyl diphosphate = ent-copalyl diphosphate. The protein operates within plant hormone biosynthesis; gibberellin biosynthesis. In terms of biological role, involved in gibberellin biosynthesis. Catalyzes the conversion of geranylgeranyl diphosphate to the gibberellin precursor ent-copalyl diphosphate (ent-CPP). Involved in the production of antifungal dolabralexin phytoalexins in response to biotic and abiotic stresses. In response to fungal infection and in associtation with KSL4, is involved in the production dolabradiene, a type of antifungal phytoalexin. The chain is Ent-copalyl diphosphate synthase 2, chloroplastic from Zea mays (Maize).